We begin with the raw amino-acid sequence, 226 residues long: Eukaryotic translation initiation factor 3 subunit K (226 aa).

One can recognise a PCI domain in the interval 42–200 (YNLDANLSLL…QLIVLPRNEF (159 aa)).

It belongs to the eIF-3 subunit K family. As to quaternary structure, component of the eukaryotic translation initiation factor 3 (eIF-3) complex.

It localises to the cytoplasm. Functionally, component of the eukaryotic translation initiation factor 3 (eIF-3) complex, which is involved in protein synthesis of a specialized repertoire of mRNAs and, together with other initiation factors, stimulates binding of mRNA and methionyl-tRNAi to the 40S ribosome. The eIF-3 complex specifically targets and initiates translation of a subset of mRNAs involved in cell proliferation. The chain is Eukaryotic translation initiation factor 3 subunit K (TIF3K1) from Oryza sativa subsp. japonica (Rice).